The primary structure comprises 44 residues: MVQCVRHFVLPRLKKDAGLPFFFPLITHSQPLNRGAFFCLGVRR.

The protein is pyr operon leader peptide (pyrL) of Shigella flexneri.